A 225-amino-acid polypeptide reads, in one-letter code: Germin-like protein 8-3 (225 aa).

Residues 1–23 form the signal peptide; sequence MASSSLFLLASLLVLASWQQAIA. Cysteines 33 and 48 form a disulfide. 2 N-linked (GlcNAc...) asparagine glycosylation sites follow: asparagine 53 and asparagine 78. In terms of domain architecture, Cupin type-1 spans 60 to 213; that stretch reads FNAAKFDMPR…AFQVEKKVID (154 aa). Residues histidine 111, histidine 113, glutamate 118, and histidine 158 each coordinate Mn(2+).

Belongs to the germin family. In terms of assembly, oligomer (believed to be a pentamer but probably hexamer).

It is found in the secreted. Its subcellular location is the extracellular space. It localises to the apoplast. In terms of biological role, plays a role in broad-spectrum disease resistance. Probably has no oxalate oxidase activity even if the active site is conserved. In Oryza sativa subsp. japonica (Rice), this protein is Germin-like protein 8-3 (GER2).